Here is a 239-residue protein sequence, read N- to C-terminus: Lactate utilization protein A (239 aa).

The protein belongs to the LutA/YkgE family.

In terms of biological role, is involved in L-lactate degradation and allows cells to grow with lactate as the sole carbon source. This Bacillus cereus (strain G9842) protein is Lactate utilization protein A.